Reading from the N-terminus, the 361-residue chain is sn-glycerol-3-phosphate import ATP-binding protein UgpC (361 aa).

One can recognise an ABC transporter domain in the interval 4-235; the sequence is LSFRNLKKTY…PASTFVAGFI (232 aa). 37–44 is a binding site for ATP; that stretch reads GPSGCGKS.

This sequence belongs to the ABC transporter superfamily. sn-glycerol-3-phosphate importer (TC 3.A.1.1.3) family. In terms of assembly, the complex is composed of two ATP-binding proteins (UgpC), two transmembrane proteins (UgpA and UgpE) and a solute-binding protein (UgpB).

It is found in the cell inner membrane. The enzyme catalyses sn-glycerol 3-phosphate(out) + ATP + H2O = sn-glycerol 3-phosphate(in) + ADP + phosphate + H(+). In terms of biological role, part of the ABC transporter complex UgpBAEC involved in sn-glycerol-3-phosphate (G3P) import. Responsible for energy coupling to the transport system. This chain is sn-glycerol-3-phosphate import ATP-binding protein UgpC, found in Bordetella avium (strain 197N).